We begin with the raw amino-acid sequence, 379 residues long: Ribosomal RNA small subunit methyltransferase H (379 aa).

Residues 71–73, glutamate 90, aspartate 157, and histidine 164 each bind S-adenosyl-L-methionine; that span reads GGH.

It belongs to the methyltransferase superfamily. RsmH family.

It is found in the cytoplasm. The enzyme catalyses cytidine(1402) in 16S rRNA + S-adenosyl-L-methionine = N(4)-methylcytidine(1402) in 16S rRNA + S-adenosyl-L-homocysteine + H(+). Functionally, specifically methylates the N4 position of cytidine in position 1402 (C1402) of 16S rRNA. The protein is Ribosomal RNA small subunit methyltransferase H of Treponema pallidum (strain Nichols).